Here is a 297-residue protein sequence, read N- to C-terminus: MRPQLSDYQHLASGKVRELYRVDDEHLLLVASDRISAYDYVLDSMIPDKGRILTAMSVFFFGLVDAPNHLAGPPDDPRIPDEVLGRALVVCQLEMLPVECVARGYLTGSGLLDYQASGKVCGIALPPGLVEASKFAEPLFTPATKAELGDHDENISFAQVIETVGGVRANQLRDRTLQIYVKAADHALTRGIIIADTKFEFGADRDGNLLLADEIFTPDSSRYWPADEYRAGVVQNSFDKQFVRNWLTSAESGWDRGGDQPPPPLPDHIIAATRERYIEAYERISGLSFGEWIGPGA.

The protein belongs to the SAICAR synthetase family.

The enzyme catalyses 5-amino-1-(5-phospho-D-ribosyl)imidazole-4-carboxylate + L-aspartate + ATP = (2S)-2-[5-amino-1-(5-phospho-beta-D-ribosyl)imidazole-4-carboxamido]succinate + ADP + phosphate + 2 H(+). The protein operates within purine metabolism; IMP biosynthesis via de novo pathway; 5-amino-1-(5-phospho-D-ribosyl)imidazole-4-carboxamide from 5-amino-1-(5-phospho-D-ribosyl)imidazole-4-carboxylate: step 1/2. This is Phosphoribosylaminoimidazole-succinocarboxamide synthase from Mycobacterium marinum (strain ATCC BAA-535 / M).